Here is a 158-residue protein sequence, read N- to C-terminus: Anaerobic nitrite reductase AHB2 (158 aa).

The Globin domain maps to 5-154 (GFTEKQEALV…LALAIKTEMK (150 aa)). The Homodimerization signature appears at 38–42 (EIAPA). Heme b contacts are provided by Ser48, Lys62, His66, and His101. The Homodimerization motif lies at 108 to 120 (DPHFEVVKEALLR).

Belongs to the plant globin family. In terms of assembly, unable to dimerize. Heme b serves as cofactor. Expressed in rosette leaves but not in roots.

It is found in the cytoplasm. It localises to the nucleus. The enzyme catalyses Fe(III)-heme b-[protein] + nitric oxide + H2O = Fe(II)-heme b-[protein] + nitrite + 2 H(+). In terms of biological role, phytoglobin that reduces nitrite to nitric oxide (NO) under anoxic conditions (e.g. during flooding or in waterlogged soil). May not function as an oxygen storage or transport protein. Has an unusually high affinity for O(2) through an hexacoordinate heme iron because of a very low dissociation constant. This Arabidopsis thaliana (Mouse-ear cress) protein is Anaerobic nitrite reductase AHB2.